A 72-amino-acid chain; its full sequence is Large ribosomal subunit protein uL29 (72 aa).

The protein belongs to the universal ribosomal protein uL29 family.

The chain is Large ribosomal subunit protein uL29 from Chlamydia trachomatis serovar L2 (strain ATCC VR-902B / DSM 19102 / 434/Bu).